A 78-amino-acid polypeptide reads, in one-letter code: DNA gyrase inhibitor YacG (78 aa).

C7, C10, C26, and C30 together coordinate Zn(2+).

This sequence belongs to the DNA gyrase inhibitor YacG family. Interacts with GyrB. Zn(2+) is required as a cofactor.

Functionally, inhibits all the catalytic activities of DNA gyrase by preventing its interaction with DNA. Acts by binding directly to the C-terminal domain of GyrB, which probably disrupts DNA binding by the gyrase. The sequence is that of DNA gyrase inhibitor YacG from Colwellia psychrerythraea (strain 34H / ATCC BAA-681) (Vibrio psychroerythus).